The primary structure comprises 321 residues: ATP phosphoribosyltransferase regulatory subunit (321 aa).

The protein belongs to the class-II aminoacyl-tRNA synthetase family. HisZ subfamily. In terms of assembly, heteromultimer composed of HisG and HisZ subunits.

Its subcellular location is the cytoplasm. The protein operates within amino-acid biosynthesis; L-histidine biosynthesis; L-histidine from 5-phospho-alpha-D-ribose 1-diphosphate: step 1/9. In terms of biological role, required for the first step of histidine biosynthesis. May allow the feedback regulation of ATP phosphoribosyltransferase activity by histidine. The polypeptide is ATP phosphoribosyltransferase regulatory subunit (Thiobacillus denitrificans (strain ATCC 25259 / T1)).